The chain runs to 281 residues: 2-dehydro-3-deoxyphosphooctonate aldolase (281 aa).

Belongs to the KdsA family.

Its subcellular location is the cytoplasm. The enzyme catalyses D-arabinose 5-phosphate + phosphoenolpyruvate + H2O = 3-deoxy-alpha-D-manno-2-octulosonate-8-phosphate + phosphate. The protein operates within carbohydrate biosynthesis; 3-deoxy-D-manno-octulosonate biosynthesis; 3-deoxy-D-manno-octulosonate from D-ribulose 5-phosphate: step 2/3. It participates in bacterial outer membrane biogenesis; lipopolysaccharide biosynthesis. The protein is 2-dehydro-3-deoxyphosphooctonate aldolase of Pseudomonas syringae pv. syringae (strain B728a).